A 117-amino-acid polypeptide reads, in one-letter code: Large ribosomal subunit protein bL19 (117 aa).

This sequence belongs to the bacterial ribosomal protein bL19 family.

Functionally, this protein is located at the 30S-50S ribosomal subunit interface and may play a role in the structure and function of the aminoacyl-tRNA binding site. The chain is Large ribosomal subunit protein bL19 from Mycoplasmopsis pulmonis (strain UAB CTIP) (Mycoplasma pulmonis).